Here is a 260-residue protein sequence, read N- to C-terminus: Mitochondrial import inner membrane translocase subunit Tim29 (260 aa).

A mitochondrion-targeting transit peptide spans 1 to 31; it reads MAAAALRRFWSRRRAEAGDAVVAKPGVWARL. Over 32–59 the chain is Mitochondrial matrix; the sequence is GSWARALLRDYAEACRDASAEARARPGR. The chain crosses the membrane as a helical span at residues 60 to 77; the sequence is AAVYVGLLGGAAACFTLA. Over 78–260 the chain is Mitochondrial intermembrane; that stretch reads PSEGAFEEAL…HSLVQAEAPR (183 aa).

In terms of assembly, component of the TIM22 complex, which core is composed of TIMM22, associated with TIMM10 (TIMM10A and/or TIMM10B), TIMM9, AGK and TIMM29. Interacts with TIMM10B; the interaction is direct. Interacts with TOMM40; linking the TIM22 complex to the TOM complex. Interacts with TIMM22 (when oxidized); the interaction is direct.

It is found in the mitochondrion inner membrane. Functionally, component of the TIM22 complex, a complex that mediates the import and insertion of multi-pass transmembrane proteins into the mitochondrial inner membrane. The TIM22 complex forms a twin-pore translocase that uses the membrane potential as the external driving force. Required for the stability of the TIM22 complex and functions in the assembly of the TIMM22 protein into the TIM22 complex. May facilitate cooperation between TIM22 and TOM complexes by interacting with TOMM40. The chain is Mitochondrial import inner membrane translocase subunit Tim29 from Homo sapiens (Human).